The sequence spans 525 residues: AarF domain-containing protein kinase 1 (525 aa).

In terms of domain architecture, Protein kinase spans 148 to 477 (SFDDTPLGAA…HKKRDAGSFF (330 aa)). ATP contacts are provided by residues 154–162 (LGAASLAQV) and K176. The Proton acceptor role is filled by D308.

It belongs to the protein kinase superfamily. ADCK protein kinase family.

The protein localises to the mitochondrion. In terms of biological role, appears to be essential for maintaining mitochondrial cristae formation and mitochondrial function by acting via YME1L1 in a kinase-independent manner to regulate essential mitochondrial structural proteins OPA1 and IMMT. The action of this enzyme is not yet clear. It is not known if it has protein kinase activity and what type of substrate it would phosphorylate (Ser, Thr or Tyr). This Mus musculus (Mouse) protein is AarF domain-containing protein kinase 1 (Adck1).